The sequence spans 512 residues: Histidine ammonia-lyase (512 aa).

A cross-link (5-imidazolinone (Ala-Gly)) is located at residues 142–144 (ASG). S143 is subject to 2,3-didehydroalanine (Ser).

It belongs to the PAL/histidase family. Post-translationally, contains an active site 4-methylidene-imidazol-5-one (MIO), which is formed autocatalytically by cyclization and dehydration of residues Ala-Ser-Gly.

The protein resides in the cytoplasm. It carries out the reaction L-histidine = trans-urocanate + NH4(+). Its pathway is amino-acid degradation; L-histidine degradation into L-glutamate; N-formimidoyl-L-glutamate from L-histidine: step 1/3. The chain is Histidine ammonia-lyase from Bartonella henselae (strain ATCC 49882 / DSM 28221 / CCUG 30454 / Houston 1) (Rochalimaea henselae).